The sequence spans 352 residues: tRNA pseudouridine synthase D (352 aa).

Asp81 (nucleophile) is an active-site residue. In terms of domain architecture, TRUD spans 157-303 (GVPNYFGTQR…MDHERRILRL (147 aa)).

It belongs to the pseudouridine synthase TruD family.

The enzyme catalyses uridine(13) in tRNA = pseudouridine(13) in tRNA. In terms of biological role, responsible for synthesis of pseudouridine from uracil-13 in transfer RNAs. The sequence is that of tRNA pseudouridine synthase D from Pseudomonas putida (strain ATCC 700007 / DSM 6899 / JCM 31910 / BCRC 17059 / LMG 24140 / F1).